The sequence spans 435 residues: MKDAEKREVIASSSLQRKRNRGRRLRKRRRRNEKRVLMVPSSLPNDVLEEIFLRFPVKALIRLKSLSKQWRSTIESRSFEERHLTIAKKAFVDHPKVMLVGEEDPIRGTGIRPDTDIGFRLFCLESASLLSFTRLNFPQGFFNWIYISESCDGLFCIHSPKSHSVYVVNPATRWLRLLPPAGFQILIHKFNPTEREWNVVMKSIFHLAFVKATDYKLVWLYNCDKYIVDASSPNVGVTKCEIFDFRKNAWRYLACTPSHQIFYYQKPASANGSVYWFTEPYNERIEVVAFDIQTETFRLLPKINPAIAGSDPHHIDMCTLDNSLCMSKREKDTMIQDIWRLKPSEDTWEKIFSIDLVSCPSSRTEKRDQFDWSKKDRVEPATPVAVCKNKKILLSHRYSRGLVKYDPLTKSIDFFSGHPTAYRKVIYFQSLISHL.

The segment at 1-29 is disordered; that stretch reads MKDAEKREVIASSSLQRKRNRGRRLRKRR. Residues 16 to 29 show a composition bias toward basic residues; it reads QRKRNRGRRLRKRR. One can recognise an F-box domain in the interval 37-82; it reads LMVPSSLPNDVLEEIFLRFPVKALIRLKSLSKQWRSTIESRSFEER. 4 Kelch repeats span residues 164-217, 224-270, 273-317, and 322-368; these read SVYV…DYKL, DKYI…PASA, SVYW…HIDM, and NSLC…EKRD.

This chain is Putative F-box/kelch-repeat protein At1g13200, found in Arabidopsis thaliana (Mouse-ear cress).